Reading from the N-terminus, the 274-residue chain is uncharacterized protein (274 aa).

Residues 1–20 (MSLEKSLDEIINERTNGFDH) show a composition bias toward basic and acidic residues. 3 disordered regions span residues 1-63 (MSLE…HDLD), 148-217 (NLKG…EDLD), and 230-274 (ASTV…MEAV). The span at 21–44 (KHSRRRGSQNRISKKSRLTYKFKR) shows a compositional bias: basic residues. Residues 45–63 (ASKEHNSSPDDGPWQHDLD) are compositionally biased toward basic and acidic residues. Positions 85–161 (FGVRVENLHY…SEIQISKKSP (77 aa)) constitute an RRM domain. The segment covering 148–160 (NLKGSEIQISKKS) has biased composition (polar residues). 2 stretches are compositionally biased toward low complexity: residues 181-190 (SSRSNRGFNR) and 200-211 (RSSSKKSSNNSI). A compositionally biased stretch (polar residues) spans 230–245 (ASTVSSHSSQDFTPSI). Positions 263–274 (LTEEMDLQMEAV) are enriched in acidic residues.

This is an uncharacterized protein from Schizosaccharomyces pombe (strain 972 / ATCC 24843) (Fission yeast).